The following is a 484-amino-acid chain: MNIKDIKKINFFISEKKNKNIHLIGIGGAGMMGIALILLKLGYKVSGSDLLESLMIKKLINLGATIYLQHSEKNIKNVDFIIKSSAISSNNKEILAAKKRNIPILLRAEMIEILMSFKKGIAVSGTHGKTTTTSMIADIFIDSGLDPTVINGGLIKSINSYAKLGSSSYFITEADESDASFLYLNPNIIIVTNIESDHIDHYDNSFKKLKQTFLTFLKKITLYGTAIVCIDNNAICDILTNLKCKIITYGFNKNADVRIFLYKQNNFIGHFYIILKNNKKLNIILNIPGKHNALNAAAAIALAIHEGINNDLMITSLKNFQGTCRRFEFLGFLSIDQGFDKRANCMLIDDYGHHPTELSETIKTIRISWPNKNLIMIFQPHRYTRTYNLYHDFVQTLSQVDVLLILHVYSANEKFIVGADSLSLFNDIKKLGKNYVTLISNHNMILDTLIQTLQGNDIILIQGAGNIDTIAHKILIKKTKKVIK.

125–131 (GTHGKTT) is an ATP binding site.

It belongs to the MurCDEF family.

The protein localises to the cytoplasm. The enzyme catalyses UDP-N-acetyl-alpha-D-muramate + L-alanine + ATP = UDP-N-acetyl-alpha-D-muramoyl-L-alanine + ADP + phosphate + H(+). It functions in the pathway cell wall biogenesis; peptidoglycan biosynthesis. Functionally, cell wall formation. The sequence is that of UDP-N-acetylmuramate--L-alanine ligase from Buchnera aphidicola subsp. Acyrthosiphon pisum (strain Tuc7).